The chain runs to 346 residues: DNA ligase (346 aa).

ATP contacts are provided by residues 32-35 (DCKY), Arg-39, 55-57 (RVS), Glu-93, Glu-142, and Arg-149. Lys-34 functions as the N6-AMP-lysine intermediate in the catalytic mechanism. Glu-223 lines the a divalent metal cation pocket. Residues Lys-238 and Lys-244 each contribute to the ATP site.

The protein belongs to the ATP-dependent DNA ligase family. It depends on a divalent metal cation as a cofactor.

The catalysed reaction is ATP + (deoxyribonucleotide)n-3'-hydroxyl + 5'-phospho-(deoxyribonucleotide)m = (deoxyribonucleotide)n+m + AMP + diphosphate.. Its function is as follows. DNA ligase, which is expressed in the early stage of lytic development, has been implicated in T7 DNA synthesis and genetic recombination. It may also play a role in T7 DNA repair. The polypeptide is DNA ligase (1.3) (Enterobacteria phage T3 (Bacteriophage T3)).